A 186-amino-acid polypeptide reads, in one-letter code: NADH-quinone oxidoreductase subunit B (186 aa).

4 residues coordinate [4Fe-4S] cluster: Cys-44, Cys-45, Cys-110, and Cys-139.

Belongs to the complex I 20 kDa subunit family. In terms of assembly, NDH-1 is composed of 14 different subunits. Subunits NuoB, C, D, E, F, and G constitute the peripheral sector of the complex. The cofactor is [4Fe-4S] cluster.

It localises to the cell inner membrane. The catalysed reaction is a quinone + NADH + 5 H(+)(in) = a quinol + NAD(+) + 4 H(+)(out). NDH-1 shuttles electrons from NADH, via FMN and iron-sulfur (Fe-S) centers, to quinones in the respiratory chain. The immediate electron acceptor for the enzyme in this species is believed to be ubiquinone. Couples the redox reaction to proton translocation (for every two electrons transferred, four hydrogen ions are translocated across the cytoplasmic membrane), and thus conserves the redox energy in a proton gradient. The protein is NADH-quinone oxidoreductase subunit B of Leptospira biflexa serovar Patoc (strain Patoc 1 / Ames).